Reading from the N-terminus, the 343-residue chain is Tetraacyldisaccharide 4'-kinase (343 aa).

An ATP-binding site is contributed by 55 to 62; that stretch reads TVGGEGKT.

This sequence belongs to the LpxK family.

The enzyme catalyses a lipid A disaccharide + ATP = a lipid IVA + ADP + H(+). Its pathway is glycolipid biosynthesis; lipid IV(A) biosynthesis; lipid IV(A) from (3R)-3-hydroxytetradecanoyl-[acyl-carrier-protein] and UDP-N-acetyl-alpha-D-glucosamine: step 6/6. Its function is as follows. Transfers the gamma-phosphate of ATP to the 4'-position of a tetraacyldisaccharide 1-phosphate intermediate (termed DS-1-P) to form tetraacyldisaccharide 1,4'-bis-phosphate (lipid IVA). This Chelativorans sp. (strain BNC1) protein is Tetraacyldisaccharide 4'-kinase.